The following is a 952-amino-acid chain: Probable mixed-linked glucan synthase 6 (952 aa).

2 helical membrane passes run 102 to 122 and 132 to 152; these read LLHP…LFVI and AMWL…SWLL. Residue Asp227 is part of the active site. The stretch at 278 to 308 forms a coiled coil; that stretch reads EEFVNDRRRVRKEYDDFKARINGLEHDIKQR. Substrate is bound by residues Asp429 and Asp431. The active site involves Asp636. Transmembrane regions (helical) follow at residues 718 to 738, 744 to 764, 782 to 802, 834 to 854, 865 to 885, and 898 to 918; these read LFLI…HFIV, MFYV…VLEV, MTAS…KVVF, WLMI…AVAF, WLKV…LYPF, and VVVL…YINI.

The protein belongs to the glycosyltransferase 2 family. Plant cellulose synthase-like F subfamily.

The protein resides in the golgi apparatus membrane. In terms of biological role, may catalyze both beta-1,3 and beta-1,4 glycosidic linkage on beta-D-glucan. Essential for (1,3;1,4)-beta-D-glucans synthesis in grasses and cereals (Poaceae). The mixed-linked glucans (which are not present in walls of dicotyledons or most other monocotyledonous plants) are particularly important constituents of the walls of the starchy endosperm and aleurone cells of cereal grains such as oats, wheat, rice and barley. They can account for up to 70% by weight of the wall. This is Probable mixed-linked glucan synthase 6 (CSLF6) from Oryza sativa subsp. japonica (Rice).